The primary structure comprises 391 residues: Carbamoyl phosphate synthase small chain (391 aa).

The segment at 1–202 (MTQPAILVLE…AHASAGSGEE (202 aa)) is CPSase. Residues serine 47, glycine 254, and glycine 256 each coordinate L-glutamine. The region spanning 206-391 (KVVAYDYGVK…RFVDLMAARA (186 aa)) is the Glutamine amidotransferase type-1 domain. The active-site Nucleophile is the cysteine 282. The L-glutamine site is built by leucine 283, glutamine 286, asparagine 324, glycine 326, and phenylalanine 327. Active-site residues include histidine 366 and glutamate 368.

It belongs to the CarA family. As to quaternary structure, composed of two chains; the small (or glutamine) chain promotes the hydrolysis of glutamine to ammonia, which is used by the large (or ammonia) chain to synthesize carbamoyl phosphate. Tetramer of heterodimers (alpha,beta)4.

It catalyses the reaction hydrogencarbonate + L-glutamine + 2 ATP + H2O = carbamoyl phosphate + L-glutamate + 2 ADP + phosphate + 2 H(+). The catalysed reaction is L-glutamine + H2O = L-glutamate + NH4(+). It functions in the pathway amino-acid biosynthesis; L-arginine biosynthesis; carbamoyl phosphate from bicarbonate: step 1/1. The protein operates within pyrimidine metabolism; UMP biosynthesis via de novo pathway; (S)-dihydroorotate from bicarbonate: step 1/3. In terms of biological role, small subunit of the glutamine-dependent carbamoyl phosphate synthetase (CPSase). CPSase catalyzes the formation of carbamoyl phosphate from the ammonia moiety of glutamine, carbonate, and phosphate donated by ATP, constituting the first step of 2 biosynthetic pathways, one leading to arginine and/or urea and the other to pyrimidine nucleotides. The small subunit (glutamine amidotransferase) binds and cleaves glutamine to supply the large subunit with the substrate ammonia. The protein is Carbamoyl phosphate synthase small chain of Xanthomonas axonopodis pv. citri (strain 306).